The chain runs to 325 residues: Malate dehydrogenase (325 aa).

9–15 contributes to the NAD(+) binding site; that stretch reads GAAGAIG. Positions 90 and 96 each coordinate substrate. NAD(+) contacts are provided by residues asparagine 103, glutamine 110, and 127–129; that span reads VGN. Substrate contacts are provided by asparagine 129 and arginine 160. Residue histidine 185 is the Proton acceptor of the active site.

This sequence belongs to the LDH/MDH superfamily. MDH type 2 family.

The enzyme catalyses (S)-malate + NAD(+) = oxaloacetate + NADH + H(+). Catalyzes the reversible oxidation of malate to oxaloacetate. The polypeptide is Malate dehydrogenase (Rubrobacter xylanophilus (strain DSM 9941 / JCM 11954 / NBRC 16129 / PRD-1)).